We begin with the raw amino-acid sequence, 127 residues long: Large ribosomal subunit protein bL12 (127 aa).

A disordered region spans residues 98–127 (PKPVKNGVSKEEAEEAKKQLVESGAEVEIK). Over residues 105–117 (VSKEEAEEAKKQL) the composition is skewed to basic and acidic residues.

It belongs to the bacterial ribosomal protein bL12 family. As to quaternary structure, homodimer. Part of the ribosomal stalk of the 50S ribosomal subunit. Forms a multimeric L10(L12)X complex, where L10 forms an elongated spine to which 2 to 4 L12 dimers bind in a sequential fashion. Binds GTP-bound translation factors.

Functionally, forms part of the ribosomal stalk which helps the ribosome interact with GTP-bound translation factors. Is thus essential for accurate translation. This is Large ribosomal subunit protein bL12 from Geobacter sulfurreducens (strain ATCC 51573 / DSM 12127 / PCA).